The chain runs to 383 residues: ATP phosphoribosyltransferase regulatory subunit (383 aa).

The protein belongs to the class-II aminoacyl-tRNA synthetase family. HisZ subfamily. Heteromultimer composed of HisG and HisZ subunits.

Its subcellular location is the cytoplasm. It functions in the pathway amino-acid biosynthesis; L-histidine biosynthesis; L-histidine from 5-phospho-alpha-D-ribose 1-diphosphate: step 1/9. Functionally, required for the first step of histidine biosynthesis. May allow the feedback regulation of ATP phosphoribosyltransferase activity by histidine. The sequence is that of ATP phosphoribosyltransferase regulatory subunit (hisZ) from Neisseria meningitidis serogroup B (strain ATCC BAA-335 / MC58).